The primary structure comprises 183 residues: Capsid protein (183 aa).

Positions 150 to 183 (RQRGRTIRRRTPSPRRRRSQSPRRRRSQSRESQC) are disordered. The span at 151–176 (QRGRTIRRRTPSPRRRRSQSPRRRRS) shows a compositional bias: basic residues. Positions 158–175 (RRTPSPRRRRSQSPRRRR) match the Bipartite nuclear localization signal motif. Phosphoserine; by host occurs at positions 162 and 170. 2 repeat units span residues 162-169 (SPRRRRSQ) and 170-177 (SPRRRRSQ). A 2 X 8 AA repeats of S-P-R-R-R-[PR]-S-Q region spans residues 162–177 (SPRRRRSQSPRRRRSQ). Residues 177–183 (QSRESQC) form an RNA binding region.

It belongs to the orthohepadnavirus core antigen family. As to quaternary structure, homodimerizes, then multimerizes. Interacts with cytosol exposed regions of viral L glycoprotein present in the reticulum-to-Golgi compartment. Interacts with human FLNB. Phosphorylated form interacts with host importin alpha; this interaction depends on the exposure of the NLS, which itself depends upon genome maturation and/or phosphorylation of the capsid protein. Interacts with host NUP153. In terms of processing, phosphorylated by host SRPK1, SRPK2, and maybe protein kinase C or GAPDH. Phosphorylation is critical for pregenomic RNA packaging. Protein kinase C phosphorylation is stimulated by HBx protein and may play a role in transport of the viral genome to the nucleus at the late step during the viral replication cycle.

It is found in the virion. The protein resides in the host cytoplasm. Functionally, self assembles to form an icosahedral capsid. Most capsids appear to be large particles with an icosahedral symmetry of T=4 and consist of 240 copies of capsid protein, though a fraction forms smaller T=3 particles consisting of 180 capsid proteins. Entering capsids are transported along microtubules to the nucleus. Phosphorylation of the capsid is thought to induce exposure of nuclear localization signal in the C-terminal portion of the capsid protein that allows binding to the nuclear pore complex via the importin (karyopherin-) alpha and beta. Capsids are imported in intact form through the nuclear pore into the nuclear basket, where it probably binds NUP153. Only capsids that contain the mature viral genome can release the viral DNA and capsid protein into the nucleoplasm. Immature capsids get stuck in the basket. Capsids encapsulate the pre-genomic RNA and the P protein. Pre-genomic RNA is reverse-transcribed into DNA while the capsid is still in the cytoplasm. The capsid can then either be directed to the nucleus, providing more genomes for transcription, or bud through the endoplasmic reticulum to provide new virions. This is Capsid protein from Homo sapiens (Human).